The following is a 345-amino-acid chain: Trace amine-associated receptor 6 (345 aa).

The Extracellular portion of the chain corresponds to 1 to 32; sequence MGSNSSPPAVLQLCYENVNGSCVKTPYSPGPR. N-linked (GlcNAc...) asparagine glycosylation occurs at N19. Intrachain disulfides connect C22–C186 and C105–C190. The helical transmembrane segment at 33 to 53 threads the bilayer; sequence VLLYAVFGFGAVLAVFGNLLV. Residues 54–68 lie on the Cytoplasmic side of the membrane; that stretch reads MISILHFKQLHSPTN. The helical transmembrane segment at 69–89 threads the bilayer; the sequence is FLIASLACADFWVGVSVMPFS. Topologically, residues 90 to 107 are extracellular; sequence MVRSIESCWYFGRSFCTF. The helical transmembrane segment at 108 to 128 threads the bilayer; sequence HTCCDVAFCYSSLFHLSFISI. Topologically, residues 129–147 are cytoplasmic; that stretch reads DRYIAVTDPLVYPTKFTVS. A helical membrane pass occupies residues 148 to 168; that stretch reads VSGICISISWILPLAYSGAVF. Residues 169–202 lie on the Extracellular side of the membrane; it reads YTGVYADGLEEVSDAVNCVGGCQVVVNQNWVLID. The helical transmembrane segment at 203 to 223 threads the bilayer; that stretch reads FLSFLIPTLVMIILYGNIFLV. The Cytoplasmic portion of the chain corresponds to 224–259; sequence ARQQAKKIETVGNKAESSSESYKARVARRERKAAKT. A helical transmembrane segment spans residues 260-276; that stretch reads LGITVVAFMISWLPYSI. Topologically, residues 277 to 282 are extracellular; that stretch reads DSLVDA. The chain crosses the membrane as a helical span at residues 283–302; that stretch reads FMGFITPAYIYEICVWCAYY. Residues 303–345 lie on the Cytoplasmic side of the membrane; sequence NSAMNPLIYALFYPWFKKAIKVIMSGQVFKNSSATMNLFSEQI.

It belongs to the G-protein coupled receptor 1 family.

Its subcellular location is the cell membrane. Its function is as follows. Olfactory receptor specific for trace amines, such as beta-phenylethylamine (beta-PEA). Trace amine compounds are enriched in animal body fluids and act on trace amine-associated receptors (TAARs) to elicit both intraspecific and interspecific innate behaviors. Beta-PEA-binding causes a conformation change that triggers signaling via G(s)-class of G alpha proteins (GNAL or GNAS). The polypeptide is Trace amine-associated receptor 6 (Taar6) (Rattus norvegicus (Rat)).